A 223-amino-acid polypeptide reads, in one-letter code: Deoxyribose-phosphate aldolase (223 aa).

The Proton donor/acceptor role is filled by D89. The Schiff-base intermediate with acetaldehyde role is filled by K152. Residue K181 is the Proton donor/acceptor of the active site.

This sequence belongs to the DeoC/FbaB aldolase family. DeoC type 1 subfamily.

The protein localises to the cytoplasm. The catalysed reaction is 2-deoxy-D-ribose 5-phosphate = D-glyceraldehyde 3-phosphate + acetaldehyde. It functions in the pathway carbohydrate degradation; 2-deoxy-D-ribose 1-phosphate degradation; D-glyceraldehyde 3-phosphate and acetaldehyde from 2-deoxy-alpha-D-ribose 1-phosphate: step 2/2. In terms of biological role, catalyzes a reversible aldol reaction between acetaldehyde and D-glyceraldehyde 3-phosphate to generate 2-deoxy-D-ribose 5-phosphate. In Bacillus cereus (strain B4264), this protein is Deoxyribose-phosphate aldolase.